The chain runs to 603 residues: NADH-ubiquinone oxidoreductase chain 5 (603 aa).

The next 16 helical transmembrane spans lie at 4-24 (YATM…GALI), 38-58 (SIIA…MCLD), 87-107 (MTFI…SLWY), 122-142 (LIFL…QLFI), 144-160 (WEGV…WWYA), 171-191 (AILY…WFLL), 211-233 (TPLL…HPWL), 241-261 (TPVS…FLLI), 272-292 (LIQT…AVCA), 301-320 (IVAF…IGIN), 325-347 (AFLH…GSII), 370-390 (STSL…TGFY), 405-422 (NAWA…TSAY), 457-477 (LTIG…PMST), 482-502 (IPLY…LTAL), and 582-602 (GMIK…LLLI).

It belongs to the complex I subunit 5 family. In terms of assembly, core subunit of respiratory chain NADH dehydrogenase (Complex I) which is composed of 45 different subunits.

The protein localises to the mitochondrion inner membrane. It carries out the reaction a ubiquinone + NADH + 5 H(+)(in) = a ubiquinol + NAD(+) + 4 H(+)(out). In terms of biological role, core subunit of the mitochondrial membrane respiratory chain NADH dehydrogenase (Complex I) which catalyzes electron transfer from NADH through the respiratory chain, using ubiquinone as an electron acceptor. Essential for the catalytic activity and assembly of complex I. In Pan troglodytes (Chimpanzee), this protein is NADH-ubiquinone oxidoreductase chain 5 (MT-ND5).